Reading from the N-terminus, the 228-residue chain is Small ribosomal subunit protein uS3 (228 aa).

The KH type-2 domain occupies 39 to 107; it reads VREFIRERLK…PVHINIEEIR (69 aa).

It belongs to the universal ribosomal protein uS3 family. In terms of assembly, part of the 30S ribosomal subunit. Forms a tight complex with proteins S10 and S14.

In terms of biological role, binds the lower part of the 30S subunit head. Binds mRNA in the 70S ribosome, positioning it for translation. The sequence is that of Small ribosomal subunit protein uS3 from Halorhodospira halophila (strain DSM 244 / SL1) (Ectothiorhodospira halophila (strain DSM 244 / SL1)).